A 203-amino-acid chain; its full sequence is Outer-membrane lipoprotein carrier protein (203 aa).

The first 20 residues, 1-20, serve as a signal peptide directing secretion; sequence MRRGRVWLAALCLAAGAAHA.

The protein belongs to the LolA family. In terms of assembly, monomer.

It localises to the periplasm. Its function is as follows. Participates in the translocation of lipoproteins from the inner membrane to the outer membrane. Only forms a complex with a lipoprotein if the residue after the N-terminal Cys is not an aspartate (The Asp acts as a targeting signal to indicate that the lipoprotein should stay in the inner membrane). This chain is Outer-membrane lipoprotein carrier protein, found in Methylibium petroleiphilum (strain ATCC BAA-1232 / LMG 22953 / PM1).